The primary structure comprises 129 residues: MKLCERLRELRQERGLRLKDIAGAAQISVPYLSDLERGRTNPSLETLQSLASTYGITVHDLLEGVEFYGDQTAGALPQGLADLIADPALGAQLTPDWIRTLARIELRGKRPRDKQDWFEIYLHLKRILD.

Residues 7–61 (LRELRQERGLRLKDIAGAAQISVPYLSDLERGRTNPSLETLQSLASTYGITVHDL) form the HTH cro/C1-type domain. Residues 18–37 (LKDIAGAAQISVPYLSDLER) constitute a DNA-binding region (H-T-H motif).

Post-translationally, cleaved between Leu-106 and Arg-107 by the IrrE metalloprotease after exposure to radiation. Cleavage inactivates DdrOP3, leading to derepression of the target genes.

Its function is as follows. Repressor specific for genes preceded by a radiation/desiccation response motif (RDRM) site, which is present upstream of several radiation-induced genes. This chain is HTH-type transcriptional regulator DdrOP3, found in Deinococcus deserti (strain DSM 17065 / CIP 109153 / LMG 22923 / VCD115).